A 386-amino-acid polypeptide reads, in one-letter code: tRNA N6-adenosine threonylcarbamoyltransferase (386 aa).

Fe cation is bound by residues His112 and His116. Substrate is bound by residues 134–138 (LASGG), Asp167, Gly180, and Asn322. Asp350 contributes to the Fe cation binding site.

The protein belongs to the KAE1 / TsaD family. Fe(2+) serves as cofactor.

It is found in the cytoplasm. It carries out the reaction L-threonylcarbamoyladenylate + adenosine(37) in tRNA = N(6)-L-threonylcarbamoyladenosine(37) in tRNA + AMP + H(+). Required for the formation of a threonylcarbamoyl group on adenosine at position 37 (t(6)A37) in tRNAs that read codons beginning with adenine. Is involved in the transfer of the threonylcarbamoyl moiety of threonylcarbamoyl-AMP (TC-AMP) to the N6 group of A37, together with TsaE and TsaB. TsaD likely plays a direct catalytic role in this reaction. In Rickettsia akari (strain Hartford), this protein is tRNA N6-adenosine threonylcarbamoyltransferase.